The primary structure comprises 282 residues: HMG box-containing protein R545 (282 aa).

Residues 1–282 (MPKKTATKAN…KKEASDEESD (282 aa)) are disordered. Positions 16–29 (DSENDSVVSEEEDN) are enriched in acidic residues. Basic residues predominate over residues 70 to 87 (KGKVNAKKAPAKKAPVKK). Residues 93–121 (DSDNEEDEASEDGSDDEEDVVSADDSDSD) are compositionally biased toward acidic residues. Basic residues predominate over residues 127–153 (KAAKKAPAKKAPAKKAPAKKAPAKKGK). Basic and acidic residues-rich tracts occupy residues 176–187 (TKKDGDKPKKPL) and 197–214 (RMPE…KEYM). A DNA-binding region (HMG box) is located at residues 183-252 (PKKPLSDYQK…KAPAKGGSKS (70 aa)). Residues 253 to 273 (TAKKAPAKKAPAKKAPAKKSK) are compositionally biased toward basic residues.

The polypeptide is HMG box-containing protein R545 (Acanthamoeba polyphaga mimivirus (APMV)).